We begin with the raw amino-acid sequence, 156 residues long: Transcription elongation factor GreA (156 aa).

This sequence belongs to the GreA/GreB family.

Its function is as follows. Necessary for efficient RNA polymerase transcription elongation past template-encoded arresting sites. The arresting sites in DNA have the property of trapping a certain fraction of elongating RNA polymerases that pass through, resulting in locked ternary complexes. Cleavage of the nascent transcript by cleavage factors such as GreA or GreB allows the resumption of elongation from the new 3'terminus. GreA releases sequences of 2 to 3 nucleotides. The sequence is that of Transcription elongation factor GreA from Thermomicrobium roseum (strain ATCC 27502 / DSM 5159 / P-2).